The chain runs to 162 residues: MKLDQVAKSLLLKEFVSGMILGMRYFFKPKATINYPFEMGHRGPRFRGEHALRRYPNGEERCIACKLCEAICPAQAITIEAGPRRNDGTRRTTRYDIDMVKCIYCGMCQEACPVDAIVEGPNFEFSVETREELLYDKQKLLLNGDRWEREIARNIAMDAPYR.

4Fe-4S ferredoxin-type domains lie at 52-82 (LRRY…IEAG) and 93-122 (TRYD…EGPN). Positions 62, 65, 68, 72, 102, 105, 108, and 112 each coordinate [4Fe-4S] cluster.

The protein belongs to the complex I 23 kDa subunit family. In terms of assembly, NDH-1 is composed of 14 different subunits. Subunits NuoA, H, J, K, L, M, N constitute the membrane sector of the complex. The cofactor is [4Fe-4S] cluster.

The protein localises to the cell inner membrane. It carries out the reaction a quinone + NADH + 5 H(+)(in) = a quinol + NAD(+) + 4 H(+)(out). Functionally, NDH-1 shuttles electrons from NADH, via FMN and iron-sulfur (Fe-S) centers, to quinones in the respiratory chain. The immediate electron acceptor for the enzyme in this species is believed to be ubiquinone. Couples the redox reaction to proton translocation (for every two electrons transferred, four hydrogen ions are translocated across the cytoplasmic membrane), and thus conserves the redox energy in a proton gradient. The chain is NADH-quinone oxidoreductase subunit I from Methylobacterium radiotolerans (strain ATCC 27329 / DSM 1819 / JCM 2831 / NBRC 15690 / NCIMB 10815 / 0-1).